The primary structure comprises 20 residues: Large ribosomal subunit protein bL31 (20 aa).

Positions 16 and 18 each coordinate Zn(2+).

The protein belongs to the bacterial ribosomal protein bL31 family. Type A subfamily. Part of the 50S ribosomal subunit. The cofactor is Zn(2+).

Its function is as follows. Binds the 23S rRNA. The sequence is that of Large ribosomal subunit protein bL31 (rpmE) from Ectopseudomonas mendocina (Pseudomonas mendocina).